The primary structure comprises 300 residues: Transcription initiation factor IIB (300 aa).

The TFIIB-type zinc-finger motif lies at 3–34; the sequence is KQRVCPVCGSTEFIYDPERGEIVCARCGYVIE. C7, C10, C26, and C29 together coordinate Zn(2+). 2 repeat units span residues 114-197 and 210-291.

It belongs to the TFIIB family.

Functionally, stabilizes TBP binding to an archaeal box-A promoter. Also responsible for recruiting RNA polymerase II to the pre-initiation complex (DNA-TBP-TFIIB). The chain is Transcription initiation factor IIB from Pyrococcus abyssi (strain GE5 / Orsay).